Reading from the N-terminus, the 941-residue chain is Cilia- and flagella-associated protein 69 (941 aa).

The span at 1–14 (MWTEEAGATAEAQE) shows a compositional bias: low complexity. Residues 1–26 (MWTEEAGATAEAQESGIRNKSSSSSQ) are disordered. Residues 16 to 26 (GIRNKSSSSSQ) show a composition bias toward polar residues.

In terms of tissue distribution, highly expressed in the testis, specifically in sperm (at protein level). Expressed in the brain, kidney, liver, lung, and intestine.

It localises to the cell projection. It is found in the cilium. The protein resides in the flagellum. Its function is as follows. Cilium- and flagellum-associated protein. In the olfactory epithelium, regulates the speed of activation and termination of the odor response and thus contributes to the robustness of olfactory transduction pathways. Required for sperm flagellum assembly and stability. The polypeptide is Cilia- and flagella-associated protein 69 (Homo sapiens (Human)).